The primary structure comprises 563 residues: uncharacterized protein (563 aa).

This sequence belongs to the HyuB family.

This is an uncharacterized protein from Methanocaldococcus jannaschii (strain ATCC 43067 / DSM 2661 / JAL-1 / JCM 10045 / NBRC 100440) (Methanococcus jannaschii).